The primary structure comprises 80 residues: UPF0248 protein M1425_2629 (80 aa).

It belongs to the UPF0248 family.

This chain is UPF0248 protein M1425_2629, found in Saccharolobus islandicus (strain M.14.25 / Kamchatka #1) (Sulfolobus islandicus).